Here is a 943-residue protein sequence, read N- to C-terminus: Isoleucine--tRNA ligase (943 aa).

Positions 58 to 68 (PYANGTIHIGH) match the 'HIGH' region motif. Residue E567 participates in L-isoleucyl-5'-AMP binding. A 'KMSKS' region motif is present at residues 608 to 612 (KMSKS). K611 is an ATP binding site. Zn(2+) is bound by residues C906, C909, C926, and C929.

Belongs to the class-I aminoacyl-tRNA synthetase family. IleS type 1 subfamily. As to quaternary structure, monomer. Requires Zn(2+) as cofactor.

Its subcellular location is the cytoplasm. It carries out the reaction tRNA(Ile) + L-isoleucine + ATP = L-isoleucyl-tRNA(Ile) + AMP + diphosphate. In terms of biological role, catalyzes the attachment of isoleucine to tRNA(Ile). As IleRS can inadvertently accommodate and process structurally similar amino acids such as valine, to avoid such errors it has two additional distinct tRNA(Ile)-dependent editing activities. One activity is designated as 'pretransfer' editing and involves the hydrolysis of activated Val-AMP. The other activity is designated 'posttransfer' editing and involves deacylation of mischarged Val-tRNA(Ile). This Pseudomonas fluorescens (strain Pf0-1) protein is Isoleucine--tRNA ligase.